We begin with the raw amino-acid sequence, 173 residues long: NADH-ubiquinone oxidoreductase chain 6 (173 aa).

The next 5 helical transmembrane spans lie at 1–21 (MTYFVIFLGICFMLGVLAVAS), 27–47 (YGVVGLVVASVMGCGWLVSLG), 48–68 (VSFVSLALFLVYLGGMLVVFV), 87–107 (VVGYGLGFVLVVWMGVVLGGL), and 139–159 (CGVGLFLVAGWGLLLALFVVL).

The protein belongs to the complex I subunit 6 family. In terms of assembly, core subunit of respiratory chain NADH dehydrogenase (Complex I) which is composed of 45 different subunits.

The protein localises to the mitochondrion inner membrane. It carries out the reaction a ubiquinone + NADH + 5 H(+)(in) = a ubiquinol + NAD(+) + 4 H(+)(out). Core subunit of the mitochondrial membrane respiratory chain NADH dehydrogenase (Complex I) which catalyzes electron transfer from NADH through the respiratory chain, using ubiquinone as an electron acceptor. Essential for the catalytic activity and assembly of complex I. This Gallus gallus (Chicken) protein is NADH-ubiquinone oxidoreductase chain 6 (MT-ND6).